Consider the following 469-residue polypeptide: Glutamate--tRNA ligase (469 aa).

Positions 11–21 (PSPTGFIHLGN) match the 'HIGH' region motif. The short motif at 243–247 (KMSKR) is the 'KMSKS' region element. Residue Lys-246 coordinates ATP.

Belongs to the class-I aminoacyl-tRNA synthetase family. Glutamate--tRNA ligase type 1 subfamily. In terms of assembly, monomer.

Its subcellular location is the cytoplasm. The catalysed reaction is tRNA(Glu) + L-glutamate + ATP = L-glutamyl-tRNA(Glu) + AMP + diphosphate. Its function is as follows. Catalyzes the attachment of glutamate to tRNA(Glu) in a two-step reaction: glutamate is first activated by ATP to form Glu-AMP and then transferred to the acceptor end of tRNA(Glu). The chain is Glutamate--tRNA ligase from Burkholderia orbicola (strain AU 1054).